The following is a 151-amino-acid chain: Small ribosomal subunit protein uS15 (151 aa).

Positions 1 to 20 (MARLHSGKRGSSGSTRPLRT) are disordered.

This sequence belongs to the universal ribosomal protein uS15 family. In terms of assembly, part of the 30S ribosomal subunit.

The chain is Small ribosomal subunit protein uS15 from Methanococcus aeolicus (strain ATCC BAA-1280 / DSM 17508 / OCM 812 / Nankai-3).